The sequence spans 447 residues: Kynurenine 3-monooxygenase (447 aa).

The protein belongs to the aromatic-ring hydroxylase family. KMO subfamily. FAD serves as cofactor.

It carries out the reaction L-kynurenine + NADPH + O2 + H(+) = 3-hydroxy-L-kynurenine + NADP(+) + H2O. It participates in cofactor biosynthesis; NAD(+) biosynthesis; quinolinate from L-kynurenine: step 1/3. In terms of biological role, catalyzes the hydroxylation of L-kynurenine (L-Kyn) to form 3-hydroxy-L-kynurenine (L-3OHKyn). Required for synthesis of quinolinic acid. This is Kynurenine 3-monooxygenase from Christiangramia forsetii (strain DSM 17595 / CGMCC 1.15422 / KT0803) (Gramella forsetii).